Consider the following 280-residue polypeptide: Phosphatidylserine decarboxylase proenzyme (280 aa).

Catalysis depends on charge relay system; for autoendoproteolytic cleavage activity residues aspartate 88, histidine 145, and serine 249. Serine 249 functions as the Schiff-base intermediate with substrate; via pyruvic acid; for decarboxylase activity in the catalytic mechanism. A Pyruvic acid (Ser); by autocatalysis modification is found at serine 249.

Belongs to the phosphatidylserine decarboxylase family. PSD-B subfamily. Prokaryotic type I sub-subfamily. As to quaternary structure, heterodimer of a large membrane-associated beta subunit and a small pyruvoyl-containing alpha subunit. The cofactor is pyruvate. In terms of processing, is synthesized initially as an inactive proenzyme. Formation of the active enzyme involves a self-maturation process in which the active site pyruvoyl group is generated from an internal serine residue via an autocatalytic post-translational modification. Two non-identical subunits are generated from the proenzyme in this reaction, and the pyruvate is formed at the N-terminus of the alpha chain, which is derived from the carboxyl end of the proenzyme. The autoendoproteolytic cleavage occurs by a canonical serine protease mechanism, in which the side chain hydroxyl group of the serine supplies its oxygen atom to form the C-terminus of the beta chain, while the remainder of the serine residue undergoes an oxidative deamination to produce ammonia and the pyruvoyl prosthetic group on the alpha chain. During this reaction, the Ser that is part of the protease active site of the proenzyme becomes the pyruvoyl prosthetic group, which constitutes an essential element of the active site of the mature decarboxylase.

Its subcellular location is the cell membrane. It catalyses the reaction a 1,2-diacyl-sn-glycero-3-phospho-L-serine + H(+) = a 1,2-diacyl-sn-glycero-3-phosphoethanolamine + CO2. The protein operates within phospholipid metabolism; phosphatidylethanolamine biosynthesis; phosphatidylethanolamine from CDP-diacylglycerol: step 2/2. Catalyzes the formation of phosphatidylethanolamine (PtdEtn) from phosphatidylserine (PtdSer). The protein is Phosphatidylserine decarboxylase proenzyme of Chromobacterium violaceum (strain ATCC 12472 / DSM 30191 / JCM 1249 / CCUG 213 / NBRC 12614 / NCIMB 9131 / NCTC 9757 / MK).